Here is a 264-residue protein sequence, read N- to C-terminus: Glutamate racemase (264 aa).

Substrate contacts are provided by residues 10–11 (DS) and 42–43 (YG). Residue Cys73 is the Proton donor/acceptor of the active site. 74–75 (NT) contacts substrate. The active-site Proton donor/acceptor is Cys183. 184 to 185 (TH) lines the substrate pocket.

The protein belongs to the aspartate/glutamate racemases family.

It catalyses the reaction L-glutamate = D-glutamate. The protein operates within cell wall biogenesis; peptidoglycan biosynthesis. Provides the (R)-glutamate required for cell wall biosynthesis. The polypeptide is Glutamate racemase (Streptococcus equi subsp. zooepidemicus (strain H70)).